A 241-amino-acid chain; its full sequence is Peptidoglycan endopeptidase RipB (241 aa).

Residues methionine 1 to alanine 31 form the signal peptide. Residues arginine 109–tyrosine 241 enclose the NlpC/P60 domain. Cysteine 152 acts as the Nucleophile in catalysis. The active-site Proton acceptor is histidine 201. Glutamate 213 is a catalytic residue.

It belongs to the peptidase C40 family. As to quaternary structure, monomer.

Peptidoglycan endopeptidase that cleaves the bond between D-glutamate and meso-diaminopimelate. Binds high-molecular weight peptidoglycan, but does not degrade it. Required for normal separation of daughter cells after cell division and cell wall integrity. Required for host cell invasion. In Mycobacterium tuberculosis (strain CDC 1551 / Oshkosh), this protein is Peptidoglycan endopeptidase RipB (ripB).